A 149-amino-acid polypeptide reads, in one-letter code: Transcription antitermination protein NusB (149 aa).

Belongs to the NusB family.

In terms of biological role, involved in transcription antitermination. Required for transcription of ribosomal RNA (rRNA) genes. Binds specifically to the boxA antiterminator sequence of the ribosomal RNA (rrn) operons. The sequence is that of Transcription antitermination protein NusB from Hahella chejuensis (strain KCTC 2396).